The chain runs to 451 residues: MQRNAVILAAGKGTRMKSNKYKVLHKVAGKSMVEHVLTNVKNAGVNQIVTIVGHGAEDVKETLGNQSLYSYQEEQLGTAHAVKMANEHLKEVEGTTLVVCGDTPLITAHTLQKLIEHHESTHAQATVLSATAQIPFGYGRIVRDEQRRLQRIVEEKDASEAQKALTEISSGIFAFDNRVLFSKLEEVKNDNAQGEYYLPDVISLILAENGVAEVYHTDDFNEIMGVNDRVMLSNAEKALQQRINIEHMRNGVTIIDPTTTFIGPDVKIGMDTIIEPGVRINGETVIGEEAVIGQYSEINNSHIGSQVDIKQSVINDSIVGDKTKVGPFAQLRPGSNLGSDVKVGNFVEVKKADLKDGAKVSHLSYIGDAEIGERTNIGCGSITVNYDGVNKFKTVVGKDAFIGCNTNLVAPVTVGDGVLIAAGSTITDNVPNESLALARARQITKEGYLKK.

Residues 1 to 229 are pyrophosphorylase; the sequence is MQRNAVILAA…FNEIMGVNDR (229 aa). Residues 8-11, Lys-22, Gln-72, and 77-78 contribute to the UDP-N-acetyl-alpha-D-glucosamine site; these read LAAG and GT. Asp-102 provides a ligand contact to Mg(2+). 3 residues coordinate UDP-N-acetyl-alpha-D-glucosamine: Gly-139, Glu-154, and Asn-227. Asn-227 serves as a coordination point for Mg(2+). Positions 230–250 are linker; sequence VMLSNAEKALQQRINIEHMRN. Positions 251 to 451 are N-acetyltransferase; sequence GVTIIDPTTT…QITKEGYLKK (201 aa). UDP-N-acetyl-alpha-D-glucosamine-binding residues include Arg-332 and Lys-350. His-362 (proton acceptor) is an active-site residue. 2 residues coordinate UDP-N-acetyl-alpha-D-glucosamine: Tyr-365 and Asn-376. Acetyl-CoA-binding positions include 385-386, Ala-422, and Arg-439; that span reads NY.

In the N-terminal section; belongs to the N-acetylglucosamine-1-phosphate uridyltransferase family. The protein in the C-terminal section; belongs to the transferase hexapeptide repeat family. Homotrimer. Mg(2+) is required as a cofactor.

Its subcellular location is the cytoplasm. The catalysed reaction is alpha-D-glucosamine 1-phosphate + acetyl-CoA = N-acetyl-alpha-D-glucosamine 1-phosphate + CoA + H(+). The enzyme catalyses N-acetyl-alpha-D-glucosamine 1-phosphate + UTP + H(+) = UDP-N-acetyl-alpha-D-glucosamine + diphosphate. Its pathway is nucleotide-sugar biosynthesis; UDP-N-acetyl-alpha-D-glucosamine biosynthesis; N-acetyl-alpha-D-glucosamine 1-phosphate from alpha-D-glucosamine 6-phosphate (route II): step 2/2. It participates in nucleotide-sugar biosynthesis; UDP-N-acetyl-alpha-D-glucosamine biosynthesis; UDP-N-acetyl-alpha-D-glucosamine from N-acetyl-alpha-D-glucosamine 1-phosphate: step 1/1. It functions in the pathway bacterial outer membrane biogenesis; LPS lipid A biosynthesis. Catalyzes the last two sequential reactions in the de novo biosynthetic pathway for UDP-N-acetylglucosamine (UDP-GlcNAc). The C-terminal domain catalyzes the transfer of acetyl group from acetyl coenzyme A to glucosamine-1-phosphate (GlcN-1-P) to produce N-acetylglucosamine-1-phosphate (GlcNAc-1-P), which is converted into UDP-GlcNAc by the transfer of uridine 5-monophosphate (from uridine 5-triphosphate), a reaction catalyzed by the N-terminal domain. The chain is Bifunctional protein GlmU from Staphylococcus haemolyticus (strain JCSC1435).